Consider the following 357-residue polypeptide: Trans-enoyl reductase resD (357 aa).

NADP(+) is bound at residue Tyr-211.

This sequence belongs to the zinc-containing alcohol dehydrogenase family.

Its pathway is antifungal biosynthesis. Functionally, trans-enoyl reductase; part of the gene cluster that mediates the biosynthesis of the tetrahydropyranyl antifungal agent restricticin that acts as an inhibitor of CYP51 and blocks the ergosterol biosynthesis. The highly reducing polyketide synthase resH, the short chain dehydrogenase resG, the cyclase resF, the FAD-dependent monooxygenase resA and the enoylreductase resD are required to generate the first stable intermediate desmethylrestrictinol. ResH with resD biosynthesize the first polyketide chain intermediate that is reduced by resG, followed by epoxidation by resA before 6-endo cyclization via epoxide opening by resF leads to desmethylrestrictinol. The methyltransferase resE then catalyzes the C4 O-methylation of desmethylrestrictinol to produce restrictinol, and the nonribosomal peptide synthetase resC catalyzes the C3 esterification of restrictinol with glycine that leads to restricticin. The chain is Trans-enoyl reductase resD from Aspergillus sclerotiorum.